Consider the following 531-residue polypeptide: High-affinity glucose transporter ght2 (531 aa).

Residues 5–13 (RGKNFTLVM) are Cytoplasmic-facing. The chain crosses the membrane as a helical span at residues 14-34 (LIFVSMAGWMFGADTGSIGGV). At 35–62 (TSMRDFRERYADRYDPITDQYSLSSARQ) the chain is on the extracellular side. The helical transmembrane segment at 63–83 (GLLTGMVNVGSLFGCIISSPI) threads the bilayer. Over 84 to 91 (ADRFGKRL) the chain is Cytoplasmic. A helical transmembrane segment spans residues 92–112 (SIIGFCAVYIIGIIVQVTAVP). Over 113–116 (SWVQ) the chain is Extracellular. Residues 117–137 (IMVAKIWTGIGIGALSVLAPG) form a helical membrane-spanning segment. Topologically, residues 138-148 (YQSETAPPSIR) are cytoplasmic. The chain crosses the membrane as a helical span at residues 149–169 (GTVVVTYQLFVTGGIFIAACI). The Extracellular portion of the chain corresponds to 170–183 (NMGTHKLHKTAQWR). A helical transmembrane segment spans residues 184-204 (VSIGINLLWGIITMIGILFLP). At 205–270 (ESPRYLIQVG…IFGKDIRYRT (66 aa)) the chain is on the cytoplasmic side. A helical membrane pass occupies residues 271–289 (FLGMFVMSLQQLTGNNYFF). The Extracellular portion of the chain corresponds to 290–305 (YYGFSVMQGAGINSPY). Residues 306 to 326 (LSAMILDAVNFGCTFGGMYVL) traverse the membrane as a helical segment. At 327 to 332 (ERFGRR) the chain is on the cytoplasmic side. Residues 333–353 (NPLIIGGIWQSICFFIYSAVG) form a helical membrane-spanning segment. Residues 354 to 367 (SRALYHKNGTSNTR) are Extracellular-facing. Asparagine 361 carries N-linked (GlcNAc...) asparagine glycosylation. Residues 368–388 (AGAVMIVMACLFIFGFAQTWA) traverse the membrane as a helical segment. The Cytoplasmic segment spans residues 389–408 (PAAYVIVGESYPVRYRSKCA). The chain crosses the membrane as a helical span at residues 409–429 (AVATASNWLWNFLISFFTPFI). Residues 430-436 (QASIGFK) are Extracellular-facing. Residues 437–457 (YGYVFASCNLTGAIVIFLFAK) traverse the membrane as a helical segment. At 458–531 (ETKGLTLEEI…QYSSHEEDYA (74 aa)) the chain is on the cytoplasmic side. The segment at 491 to 531 (KKVEKEKSRKGGARGESVEYVERASNTDSSPQYSSHEEDYA) is disordered. 4 positions are modified to phosphoserine: serine 507, serine 515, serine 519, and serine 520. Positions 514–524 (ASNTDSSPQYS) are enriched in polar residues. Tyrosine 523 is subject to Phosphotyrosine.

It belongs to the major facilitator superfamily. Sugar transporter (TC 2.A.1.1) family.

It is found in the membrane. In terms of biological role, high-affinity glucose transporter. The sequence is that of High-affinity glucose transporter ght2 (ght2) from Schizosaccharomyces pombe (strain 972 / ATCC 24843) (Fission yeast).